Reading from the N-terminus, the 289-residue chain is ATP synthase gamma chain (289 aa).

Belongs to the ATPase gamma chain family. As to quaternary structure, F-type ATPases have 2 components, CF(1) - the catalytic core - and CF(0) - the membrane proton channel. CF(1) has five subunits: alpha(3), beta(3), gamma(1), delta(1), epsilon(1). CF(0) has three main subunits: a, b and c.

It is found in the cell membrane. In terms of biological role, produces ATP from ADP in the presence of a proton gradient across the membrane. The gamma chain is believed to be important in regulating ATPase activity and the flow of protons through the CF(0) complex. In Mycoplasmoides gallisepticum (strain R(low / passage 15 / clone 2)) (Mycoplasma gallisepticum), this protein is ATP synthase gamma chain.